Reading from the N-terminus, the 228-residue chain is Urease accessory protein UreF (228 aa).

The protein belongs to the UreF family. As to quaternary structure, ureD, UreF and UreG form a complex that acts as a GTP-hydrolysis-dependent molecular chaperone, activating the urease apoprotein by helping to assemble the nickel containing metallocenter of UreC. The UreE protein probably delivers the nickel.

It localises to the cytoplasm. Its function is as follows. Required for maturation of urease via the functional incorporation of the urease nickel metallocenter. This Brucella ovis (strain ATCC 25840 / 63/290 / NCTC 10512) protein is Urease accessory protein UreF.